A 472-amino-acid chain; its full sequence is Putative diacyglycerol O-acyltransferase MT3172 (472 aa).

The Proton acceptor role is filled by histidine 139. The tract at residues 217 to 238 (DRRVPPTFDRSAPPGPFQRGLS) is disordered.

Belongs to the long-chain O-acyltransferase family.

It catalyses the reaction an acyl-CoA + a 1,2-diacyl-sn-glycerol = a triacyl-sn-glycerol + CoA. The protein operates within glycerolipid metabolism; triacylglycerol biosynthesis. This chain is Putative diacyglycerol O-acyltransferase MT3172, found in Mycobacterium tuberculosis (strain CDC 1551 / Oshkosh).